The sequence spans 615 residues: 1-deoxy-D-xylulose-5-phosphate synthase (615 aa).

Residues His72 and 111–113 each bind thiamine diphosphate; that span reads GHS. Asp142 contributes to the Mg(2+) binding site. Thiamine diphosphate-binding positions include 143-144, Asn171, Tyr278, and Glu360; that span reads GA. Mg(2+) is bound at residue Asn171.

The protein belongs to the transketolase family. DXPS subfamily. In terms of assembly, homodimer. Requires Mg(2+) as cofactor. The cofactor is thiamine diphosphate.

The enzyme catalyses D-glyceraldehyde 3-phosphate + pyruvate + H(+) = 1-deoxy-D-xylulose 5-phosphate + CO2. The protein operates within metabolic intermediate biosynthesis; 1-deoxy-D-xylulose 5-phosphate biosynthesis; 1-deoxy-D-xylulose 5-phosphate from D-glyceraldehyde 3-phosphate and pyruvate: step 1/1. In terms of biological role, catalyzes the acyloin condensation reaction between C atoms 2 and 3 of pyruvate and glyceraldehyde 3-phosphate to yield 1-deoxy-D-xylulose-5-phosphate (DXP). This Campylobacter jejuni subsp. jejuni serotype O:2 (strain ATCC 700819 / NCTC 11168) protein is 1-deoxy-D-xylulose-5-phosphate synthase.